Reading from the N-terminus, the 552-residue chain is Esterase E4 (552 aa).

The signal sequence occupies residues 1–23; it reads MKNTCGILLNLFLFIGCFLTCSA. An N-linked (GlcNAc...) asparagine glycan is attached at N81. Cysteines 89 and 106 form a disulfide. S214 acts as the Acyl-ester intermediate in catalysis. A disulfide bond links C266 and C277. N-linked (GlcNAc...) asparagine glycosylation occurs at N269. E339 acts as the Charge relay system in catalysis. 3 N-linked (GlcNAc...) asparagine glycosylation sites follow: N371, N404, and N443. H463 acts as the Charge relay system in catalysis.

It belongs to the type-B carboxylesterase/lipase family.

It catalyses the reaction a carboxylic ester + H2O = an alcohol + a carboxylate + H(+). In terms of biological role, overproduction of nonspecific esterases is a common mechanism of resistance to organophosphate insecticides. This Myzus persicae (Green peach aphid) protein is Esterase E4.